The sequence spans 76 residues: Vasotab-TY3 (76 aa).

The signal sequence occupies residues 1 to 21; sequence MKFALFSVLVLMLIATFVAAD. A Kazal-like domain is found at 22–76; sequence DCPRICTSDYTPVCGTPSGGRRSANRTFANQCGLDSHNCLNKGDTYDKLHDGECK. Disulfide bonds link cysteine 23-cysteine 60, cysteine 27-cysteine 53, and cysteine 35-cysteine 75.

In terms of tissue distribution, expressed by the salivary gland.

It is found in the secreted. Functionally, vasodilator protein that inhibits vasoconstriction of isolated rat femoral artery induced by phenylephrine. Since platelet aggregation and vasoconstriction are key hemostatic responses, particularly in small wounds, this protein likely participates in the antihemostatic responses during blood feeding. Blocks L-type calcium channels (Cav1/CACNA1) in left ventricular myocytes isolated from rat hearts. This chain is Vasotab-TY3, found in Tabanus yao (Horsefly).